Consider the following 443-residue polypeptide: Xaa-Pro dipeptidase (443 aa).

Mn(2+) is bound by residues D246, D257, H339, E384, and E423.

This sequence belongs to the peptidase M24B family. Bacterial-type prolidase subfamily. It depends on Mn(2+) as a cofactor.

The enzyme catalyses Xaa-L-Pro dipeptide + H2O = an L-alpha-amino acid + L-proline. In terms of biological role, splits dipeptides with a prolyl residue in the C-terminal position. In Citrobacter koseri (strain ATCC BAA-895 / CDC 4225-83 / SGSC4696), this protein is Xaa-Pro dipeptidase.